The primary structure comprises 131 residues: Small ribosomal subunit protein uS8 (131 aa).

It belongs to the universal ribosomal protein uS8 family. In terms of assembly, part of the 30S ribosomal subunit. Contacts proteins S5 and S12.

Its function is as follows. One of the primary rRNA binding proteins, it binds directly to 16S rRNA central domain where it helps coordinate assembly of the platform of the 30S subunit. The polypeptide is Small ribosomal subunit protein uS8 (Leptothrix cholodnii (strain ATCC 51168 / LMG 8142 / SP-6) (Leptothrix discophora (strain SP-6))).